The primary structure comprises 355 residues: F-box only protein 32 (355 aa).

Residues 62–67 (KKRKKD) carry the Nuclear localization signal motif. The short motif at 169 to 173 (LLQTL) is the Nuclear export signal element. The F-box domain maps to 223–271 (LTITDLPVCLQLNIMQRLSDGRDLVSLGQAAPDLHVLSEDRLLWKRLCQ). Positions 280 to 295 (RKRLILSDKGQLDWKK) match the Bipartite nuclear localization signal motif.

Part of the SCF (SKP1-CUL1-F-box) E3 ubiquitin-protein ligase complex SCF(FBXO32) formed of CUL1, SKP1, RBX1 and FBXO32. As to expression, specifically expressed in cardiac and skeletal muscle.

It is found in the cytoplasm. The protein resides in the nucleus. It participates in protein modification; protein ubiquitination. Its function is as follows. Substrate recognition component of a SCF (SKP1-CUL1-F-box protein) E3 ubiquitin-protein ligase complex which mediates the ubiquitination and subsequent proteasomal degradation of target proteins. Probably recognizes and binds to phosphorylated target proteins during skeletal muscle atrophy. Recognizes TERF1. This Mus musculus (Mouse) protein is F-box only protein 32 (Fbxo32).